The following is a 78-amino-acid chain: Large ribosomal subunit protein uL29 (78 aa).

The protein belongs to the universal ribosomal protein uL29 family.

The chain is Large ribosomal subunit protein uL29 from Rhodococcus erythropolis (strain PR4 / NBRC 100887).